The following is a 62-amino-acid chain: Large ribosomal subunit protein uL29 (62 aa).

The protein belongs to the universal ribosomal protein uL29 family.

This is Large ribosomal subunit protein uL29 from Chromobacterium violaceum (strain ATCC 12472 / DSM 30191 / JCM 1249 / CCUG 213 / NBRC 12614 / NCIMB 9131 / NCTC 9757 / MK).